A 43-amino-acid chain; its full sequence is Protein PsbN (43 aa).

A helical membrane pass occupies residues 7-27; the sequence is IAIFISGLLVSFTGYALYTAF.

It belongs to the PsbN family.

It is found in the plastid. It localises to the chloroplast thylakoid membrane. Functionally, may play a role in photosystem I and II biogenesis. The chain is Protein PsbN from Suaeda maritima (Annual sea blite).